The sequence spans 364 residues: Chorismate synthase (364 aa).

Arginine 47 is an NADP(+) binding site. Residues 125 to 127 (RFS), glycine 285, 300 to 304 (KPTPS), and arginine 327 contribute to the FMN site.

The protein belongs to the chorismate synthase family. As to quaternary structure, homotetramer. It depends on FMNH2 as a cofactor.

The catalysed reaction is 5-O-(1-carboxyvinyl)-3-phosphoshikimate = chorismate + phosphate. The protein operates within metabolic intermediate biosynthesis; chorismate biosynthesis; chorismate from D-erythrose 4-phosphate and phosphoenolpyruvate: step 7/7. Functionally, catalyzes the anti-1,4-elimination of the C-3 phosphate and the C-6 proR hydrogen from 5-enolpyruvylshikimate-3-phosphate (EPSP) to yield chorismate, which is the branch point compound that serves as the starting substrate for the three terminal pathways of aromatic amino acid biosynthesis. This reaction introduces a second double bond into the aromatic ring system. The sequence is that of Chorismate synthase from Dehalococcoides mccartyi (strain ATCC BAA-2266 / KCTC 15142 / 195) (Dehalococcoides ethenogenes (strain 195)).